The chain runs to 168 residues: MSAVDPIADMFSAIKNAIMRRDAFLYVPSSKMKERILEVLKREGFIQDWEALKGEKYEEEFKKMKELAEKSPNPKMRRYLQQLIDYNKGTQYPLKIYLKYLDPKKRRSALTNIVRVSKGGRRVYAGVRTMPYVKRGLGIAIVSTDAGVMTDHEARKLRKGGEVIAFVW.

Residues 59-93 (EEFKKMKELAEKSPNPKMRRYLQQLIDYNKGTQYP) are not found in other S8 sequences.

This sequence belongs to the universal ribosomal protein uS8 family. In terms of assembly, part of the 30S ribosomal subunit. Contacts proteins S5 and S12.

Its function is as follows. One of the primary rRNA binding proteins, it binds directly to 16S rRNA central domain where it helps coordinate assembly of the platform of the 30S subunit. This chain is Small ribosomal subunit protein uS8, found in Aquifex pyrophilus.